Reading from the N-terminus, the 304-residue chain is MATH domain and coiled-coil domain-containing protein At2g42470 (304 aa).

In terms of domain architecture, MATH spans 6-123 (QTSFTFEIDN…NNKLIIEVQV (118 aa)). The stretch at 219-292 (FKVDWLKKKL…LKIELDRTRR (74 aa)) forms a coiled coil.

This is MATH domain and coiled-coil domain-containing protein At2g42470 from Arabidopsis thaliana (Mouse-ear cress).